We begin with the raw amino-acid sequence, 504 residues long: MGETLGDSLIDPESDAFDTLSANISQEVTMVDTEMPFWPTNFGISSVDLSVMDDHSHSFDIKPFTTVDFSSISTPHYEDIPFPRADPMVADYKYDLKLQDYQSAIKVEPVSPPYYSEKTQLYNKPHEEPSNSLMAIECRVCGDKASGFHYGVHACEGCKGFFRRTIRLKLIYDRCDLNCRIHKKSRNKCQYCRFQKCLAVGMSHNAIRFGRMPQAEKEKLLAEISSDIDQLNPESADLRALAKHLYDSYIKSFPLTKAKARAILTGKTTDKSPFVIYDMNSLMMGEDKIKFKHITPLQEQSKEVAIRIFQGCQFRSVEAVQEITEYAKNIPGFVNLDLNDQVTLLKYGVHEIIYTMLASLMNKDGVLISEGQGFMTREFLKSLRKPFGDFMEPKFEFAVKFNALELDDSDLAIFIAVIILSGDRPGLLNVKPIEDIQDNLLQALELQLKLNHPESSQLFAKLLQKMTDLRQIVTEHVQLLQVIKKTETDMSLHPLLQEIYKDLY.

S111 carries the post-translational modification Phosphoserine; by MAPK. A DNA-binding region (nuclear receptor) is located at residues 135-209 (AIECRVCGDK…VGMSHNAIRF (75 aa)). 2 consecutive NR C4-type zinc fingers follow at residues 138 to 158 (CRVC…CEGC) and 175 to 197 (CDLN…FQKC). The tract at residues 204–279 (HNAIRFGRMP…DKSPFVIYDM (76 aa)) is interaction with FAM120B. The region spanning 237 to 502 (DLRALAKHLY…HPLLQEIYKD (266 aa)) is the NR LBD domain. A Glycyl lysine isopeptide (Lys-Gly) (interchain with G-Cter in ubiquitin) cross-link involves residue K251. The 9aaTAD signature appears at 494–502 (PLLQEIYKD).

This sequence belongs to the nuclear hormone receptor family. NR1 subfamily. In terms of assembly, interacts with FOXO1 (acetylated form). Heterodimer with other nuclear receptors, such as RXRA. The heterodimer with the retinoic acid receptor RXRA is called adipocyte-specific transcription factor ARF6. Interacts with NCOA6 coactivator, leading to a strong increase in transcription of target genes. Interacts with coactivator PPARBP, leading to a mild increase in transcription of target genes. Interacts with NOCA7 in a ligand-inducible manner. Interacts with NCOA1 and NCOA2 LXXLL motifs. Interacts with ASXL1, ASXL2, DNTTIP2, FAM120B, MAP2K1/MEK1, NR0B2, PDPK1, PRDM16, PRMT2 and TGFB1I1. Interacts (when activated by agonist) with PPP5C. Interacts with HELZ2 and THRAP3; the interaction stimulates the transcriptional activity of PPARG. Interacts with PER2, the interaction is ligand dependent and blocks PPARG recruitment to target promoters. Interacts with NOCT. Interacts with ACTN4. Interacts (when in the liganded conformation) with GPS2. Interacts with CRY1 and CRY2 in a ligand-dependent manner. In the absence of hormonal ligand, interacts with TACC1. In macrophages, interacts with PAQR3 and STUB1; the interactions promote PPARG poylubiquitination and STUB1-mediated degradation. In terms of processing, phosphorylated at basal conditions and dephosphorylated when treated with the ligand. May be dephosphorylated by PPP5C. The phosphorylated form may be inactive and dephosphorylation induces adipogenic activity. Post-translationally, ubiquitinated by E3 ubiquitin-protein ligase complex containing FBXO9; leading to proteasomal degradation. Ubiquitinated at Lys-251 by TRIM55 leading to proteasomal degradation. Ubiquitinated by E3 ubiquitin-protein ligase STUB1/CHIP; leading to proteasomal degradation. In terms of tissue distribution, highest expression in adipose tissue and lower in spleen. Very low levels in kidney, intestine, lung and muscle.

It localises to the nucleus. It is found in the cytoplasm. With respect to regulation, PDPK1 activates its transcriptional activity independently of its kinase activity. Functionally, nuclear receptor that binds peroxisome proliferators such as hypolipidemic drugs and fatty acids. Once activated by a ligand, the nuclear receptor binds to DNA specific PPAR response elements (PPRE) and modulates the transcription of its target genes, such as acyl-CoA oxidase. It therefore controls the peroxisomal beta-oxidation pathway of fatty acids. Key regulator of adipocyte differentiation and glucose homeostasis. ARF6 acts as a key regulator of the tissue-specific adipocyte P2 (aP2) enhancer. Acts as a critical regulator of gut homeostasis by suppressing NF-kappa-B-mediated pro-inflammatory responses. Plays a role in the regulation of cardiovascular circadian rhythms by regulating the transcription of BMAL1 in the blood vessels. This is Peroxisome proliferator-activated receptor gamma (PPARG) from Sus scrofa (Pig).